A 463-amino-acid chain; its full sequence is MPSLPLLLRLWAASSYSFPVIQDGLQKNVKTVWKYLENYYNLGKNMQAKNVNGKEVMAEKLRQMQQLFGLKVTGNSDPETLRAMKKPRCGVPDVAPYAITHNNPRWTKTHLTYSILNYTPYLSKAVVEDAIARAFRVWSDVTPLTFQRVFEEEGDIVLSFHRGDHGDLYTFDGSKYHFAHAFLPGLGLGGNVHYDLDQKWTDNNEDFNLFYVTAHELGHSLGLSHSNDEEALMFPSYTWSNKDFVLNQDDINRIQALYGPSPNPIQLTDATLDPCNSGLTFDAIITYRGEVIFFKDRFYIRVISFLPEPLIDVIDLTWPNLPGKFDAAYEVSGVDELRFFKGSKVWAVQEQNVLEGFPMDIQSFFGFPSNVTNIDAAVCEEETGKTYFFVDHMYWRYDENTRSMDPGYPRLIAEDFPGIDYKVDDVIQKEDNFYFFHQSIQYRFNLKTRRIDDSSDINTWFNC.

The first 17 residues, Met-1 to Ser-17, serve as a signal peptide directing secretion. Positions Phe-18 to Pro-96 are cleaved as a propeptide — activation peptide. The short motif at Pro-87–Val-94 is the Cysteine switch element. Cys-89 is a binding site for Zn(2+). Positions Ala-95–Asp-273 are metalloprotease. Asp-155 is a Ca(2+) binding site. Zn(2+) contacts are provided by His-165 and Asp-167. 2 residues coordinate Ca(2+): Asp-172 and Gly-173. Residue His-180 coordinates Zn(2+). Residues Gly-187 and Gly-189 each coordinate Ca(2+). His-193 contacts Zn(2+). Ca(2+) is bound at residue Asp-195. His-215 is a binding site for Zn(2+). Residue Glu-216 is part of the active site. Zn(2+) contacts are provided by His-219 and His-225. A disulfide bond links Cys-275 and Cys-463. Hemopexin repeat units lie at residues Gly-278–Leu-321 and Pro-322–Pro-368. Asp-282 contacts Ca(2+). Residue Asn-370 is glycosylated (N-linked (GlcNAc...) asparagine). Hemopexin repeat units lie at residues Val-371–Ile-419 and Asp-420–Cys-463. The Ca(2+) site is built by Asp-375 and Asp-424.

Belongs to the peptidase M10A family. It depends on Ca(2+) as a cofactor. Zn(2+) serves as cofactor.

It is found in the secreted. The protein localises to the extracellular space. It localises to the extracellular matrix. The enzyme catalyses Cleavage of the triple helix of collagen at about three-quarters of the length of the molecule from the N-terminus, at 775-Gly-|-Ile-776 in the alpha1(I) chain. Cleaves synthetic substrates and alpha-macroglobulins at bonds where P1' is a hydrophobic residue.. With respect to regulation, can be activated without removal of the activation peptide. The protein is Interstitial collagenase B (Mmp1b) of Mus musculus (Mouse).